The following is a 354-amino-acid chain: Uroporphyrinogen decarboxylase (354 aa).

Substrate-binding positions include 27-31 (RQAGR), Asp77, Tyr153, Thr208, and His326.

It belongs to the uroporphyrinogen decarboxylase family. In terms of assembly, homodimer.

The protein resides in the cytoplasm. It carries out the reaction uroporphyrinogen III + 4 H(+) = coproporphyrinogen III + 4 CO2. It participates in porphyrin-containing compound metabolism; protoporphyrin-IX biosynthesis; coproporphyrinogen-III from 5-aminolevulinate: step 4/4. Catalyzes the decarboxylation of four acetate groups of uroporphyrinogen-III to yield coproporphyrinogen-III. This is Uroporphyrinogen decarboxylase from Neisseria gonorrhoeae (strain NCCP11945).